The chain runs to 612 residues: MGPSVRPGFLVVVIGLQFVAASMEVNSRKFEPMVAFICNKPAMHRVPSGWVPDDDPAKSCVKQPEEILEYCKKLYPDHDITNVLQASYKVTIPNWCGFNVTHCHKHGNHTVRPFRCLVGPFQSEALLVPEHCIFDHYHDPRVCNEFDQCNETAMSKCSARGMTTQSFAMLWPCQEPGHFSGVEFVCCPKVSLIPESTEAPKSSPPTPAKTENGLDDYTAYLKGDSKYMSKYANEHERFKAAEKVMQQFQRERDTKMMKDWKAARDSVREKKKTDPKKAMELNKELTERYQKIYHAYEQESIAEKKQLVNTHQQHIQSWLNNRKQVLMEKLQDALLAKPPKKSKIEKAATAYIKVEEKDKMHTYNHFQHLRDTDPEDAANIQDRVLEHLNLIDDRIRRVLDWLKRDPEIEKQVRPNIDKFMAKYKDINANSMKLLLRQEPTPKEAPVETQKAEDYSEEDEAAVTGTANKVKPTEARPEQQEDIKTPGFDSETFEDERPAIAEQTIHDLPNHRKKGYIAHVQQQPMIADEVSLDNLYANSHANSVLGIAIGGVVVFIIIVVAVVMLKRRTQRQRVTHGFVEVDPAASPEERHVANMQMSGYENPTYKYFEMQNQ.

A signal peptide spans 1 to 21; sequence MGPSVRPGFLVVVIGLQFVAA. Over 22 to 542 the chain is Extracellular; that stretch reads SMEVNSRKFE…NLYANSHANS (521 aa). Residues 28–122 are GFLD subdomain; that stretch reads RKFEPMVAFI…PFRCLVGPFQ (95 aa). Residues 28-189 form the E1 domain; it reads RKFEPMVAFI…SGVEFVCCPK (162 aa). Intrachain disulfides connect C38-C60, C71-C116, C96-C103, C132-C187, C143-C173, and C157-C186. N99, N108, and N150 each carry an N-linked (GlcNAc...) asparagine glycan. Residues 130-189 form a cuBD subdomain region; sequence EHCIFDHYHDPRVCNEFDQCNETAMSKCSARGMTTQSFAMLWPCQEPGHFSGVEFVCCPK. The E2 domain maps to 223–419; the sequence is GDSKYMSKYA…KQVRPNIDKF (197 aa). 2 disordered regions span residues 251–276 and 437–490; these read ERDT…TDPK and QEPT…FDSE. Basic and acidic residues-rich tracts occupy residues 439–453 and 470–483; these read PTPK…KAED and KPTE…EDIK. The chain crosses the membrane as a helical span at residues 543–563; the sequence is VLGIAIGGVVVFIIIVVAVVM. The Cytoplasmic segment spans residues 564–612; the sequence is LKRRTQRQRVTHGFVEVDPAASPEERHVANMQMSGYENPTYKYFEMQNQ. The segment at 598-612 is required for the interaction with kinesin heavy chain and for anterograde transport in axons; sequence GYENPTYKYFEMQNQ. Positions 599–604 match the YENPXY motif motif; the sequence is YENPTY.

It belongs to the APP family. Interacts (via cytoplasmic domain) with kinesin heavy chain. In terms of tissue distribution, expressed in the cervicothoracic ganglion (stellate ganglion) (at protein level).

It localises to the cell membrane. The protein resides in the cell projection. The protein localises to the axon. Its function is as follows. Acts as a kinesin I membrane receptor, thereby playing a role in axonal anterograde transport of cargo towards synapses in axons. The chain is Amyloid-beta precursor-like protein from Doryteuthis pealeii (Longfin inshore squid).